The primary structure comprises 554 residues: MRREGTTRLHRTFLLRVYLKESAVITYPASKKIYCQGKIFPTIRVGMREIQLTNGDSLTLYDTSGPYSDPNISIKSPQGLPRLREPWIKVRPRKTQLAFAKEGVITPEMEYAAIRENQKRELKKNTDQERERRLQGNSLSARIPNPITPEFIRNEIACGRAILPANINHPESEPMIIGRHFLVKVNANIGNSSLTSSVEEEVEKLIWALRWGADTVMDLSTGKKIKEIRETILRHSPVPIGTVPLYEALEKVDGDVKALTWEIFRDTLISQAEQGVDYFTIHAGVLNRFIPLTQKRVTGIVSRGGSLMAKWCLLHREENFLYTHFTEICEIMRAYDVSFSLGDGLRPGSIADANDEAQFAELKIQGELNRIAWKYGVQVMNEGPGHIPLNLIEENMTKQLAYCREAPFYTLGPLTTDIAPGYDHIGSAIGAAFIAWQGCALLCYVTPKEHLGLPNKQDVKEGLIAYKIAAHAADLAKGHPAARQRDDLLSQARFEFRWHDQFNLALDAETARLFHDETLPKEAAKHAHFCSLCGPKFCAYKTSHEVRDTLQKVT.

Substrate-binding positions include Asn188, Met217, Tyr246, His282, Ser302 to Gly304, Asp343 to Arg346, and Glu382. Residue His386 participates in Zn(2+) binding. Residue Tyr409 participates in substrate binding. His450 provides a ligand contact to Zn(2+). Cys530, Cys533, and Cys538 together coordinate [4Fe-4S] cluster.

It belongs to the ThiC family. As to quaternary structure, homodimer. [4Fe-4S] cluster serves as cofactor.

The catalysed reaction is 5-amino-1-(5-phospho-beta-D-ribosyl)imidazole + S-adenosyl-L-methionine = 4-amino-2-methyl-5-(phosphooxymethyl)pyrimidine + CO + 5'-deoxyadenosine + formate + L-methionine + 3 H(+). It functions in the pathway cofactor biosynthesis; thiamine diphosphate biosynthesis. In terms of biological role, catalyzes the synthesis of the hydroxymethylpyrimidine phosphate (HMP-P) moiety of thiamine from aminoimidazole ribotide (AIR) in a radical S-adenosyl-L-methionine (SAM)-dependent reaction. The polypeptide is Phosphomethylpyrimidine synthase (Coxiella burnetii (strain CbuK_Q154) (Coxiella burnetii (strain Q154))).